The following is a 360-amino-acid chain: Peptide chain release factor 1 (360 aa).

Gln-237 is subject to N5-methylglutamine.

It belongs to the prokaryotic/mitochondrial release factor family. Post-translationally, methylated by PrmC. Methylation increases the termination efficiency of RF1.

Its subcellular location is the cytoplasm. Its function is as follows. Peptide chain release factor 1 directs the termination of translation in response to the peptide chain termination codons UAG and UAA. The chain is Peptide chain release factor 1 from Ectopseudomonas mendocina (strain ymp) (Pseudomonas mendocina).